Consider the following 333-residue polypeptide: DNA repair and recombination protein RadA (333 aa).

127-134 is an ATP binding site; the sequence is GEFGSGKT.

The protein belongs to the eukaryotic RecA-like protein family.

Its function is as follows. Involved in DNA repair and in homologous recombination. Binds and assemble on single-stranded DNA to form a nucleoprotein filament. Hydrolyzes ATP in a ssDNA-dependent manner and promotes DNA strand exchange between homologous DNA molecules. This Pyrobaculum aerophilum (strain ATCC 51768 / DSM 7523 / JCM 9630 / CIP 104966 / NBRC 100827 / IM2) protein is DNA repair and recombination protein RadA.